Here is a 335-residue protein sequence, read N- to C-terminus: Holliday junction branch migration complex subunit RuvB (335 aa).

The segment at 1–181 (MERIIEIEKM…FGMNFWMQFY (181 aa)) is large ATPase domain (RuvB-L). Residues Leu20, Arg21, Gly62, Lys65, Thr66, Thr67, 128-130 (EDF), Arg171, Tyr181, and Arg218 each bind ATP. A Mg(2+)-binding site is contributed by Thr66. Positions 182-252 (NIEELSQIIT…QARYALHELG (71 aa)) are small ATPAse domain (RuvB-S). The segment at 255–335 (DHGFDDLDLR…LPFEPNATLF (81 aa)) is head domain (RuvB-H). Positions 309 and 314 each coordinate DNA.

It belongs to the RuvB family. In terms of assembly, homohexamer. Forms an RuvA(8)-RuvB(12)-Holliday junction (HJ) complex. HJ DNA is sandwiched between 2 RuvA tetramers; dsDNA enters through RuvA and exits via RuvB. An RuvB hexamer assembles on each DNA strand where it exits the tetramer. Each RuvB hexamer is contacted by two RuvA subunits (via domain III) on 2 adjacent RuvB subunits; this complex drives branch migration. In the full resolvosome a probable DNA-RuvA(4)-RuvB(12)-RuvC(2) complex forms which resolves the HJ.

Its subcellular location is the cytoplasm. The enzyme catalyses ATP + H2O = ADP + phosphate + H(+). Functionally, the RuvA-RuvB-RuvC complex processes Holliday junction (HJ) DNA during genetic recombination and DNA repair, while the RuvA-RuvB complex plays an important role in the rescue of blocked DNA replication forks via replication fork reversal (RFR). RuvA specifically binds to HJ cruciform DNA, conferring on it an open structure. The RuvB hexamer acts as an ATP-dependent pump, pulling dsDNA into and through the RuvAB complex. RuvB forms 2 homohexamers on either side of HJ DNA bound by 1 or 2 RuvA tetramers; 4 subunits per hexamer contact DNA at a time. Coordinated motions by a converter formed by DNA-disengaged RuvB subunits stimulates ATP hydrolysis and nucleotide exchange. Immobilization of the converter enables RuvB to convert the ATP-contained energy into a lever motion, pulling 2 nucleotides of DNA out of the RuvA tetramer per ATP hydrolyzed, thus driving DNA branch migration. The RuvB motors rotate together with the DNA substrate, which together with the progressing nucleotide cycle form the mechanistic basis for DNA recombination by continuous HJ branch migration. Branch migration allows RuvC to scan DNA until it finds its consensus sequence, where it cleaves and resolves cruciform DNA. The chain is Holliday junction branch migration complex subunit RuvB from Wolinella succinogenes (strain ATCC 29543 / DSM 1740 / CCUG 13145 / JCM 31913 / LMG 7466 / NCTC 11488 / FDC 602W) (Vibrio succinogenes).